The chain runs to 658 residues: Threonine--tRNA ligase (658 aa).

A TGS domain is found at 1–64; it reads MSNTVSLQFP…GASGKVEIIT (64 aa). Residues 246 to 548 form a catalytic region; that stretch reads DHRRLGREMD…LIENFAGHMP (303 aa). Residues Cys343, His394, and His525 each contribute to the Zn(2+) site.

This sequence belongs to the class-II aminoacyl-tRNA synthetase family. Homodimer. The cofactor is Zn(2+).

The protein localises to the cytoplasm. It carries out the reaction tRNA(Thr) + L-threonine + ATP = L-threonyl-tRNA(Thr) + AMP + diphosphate + H(+). In terms of biological role, catalyzes the attachment of threonine to tRNA(Thr) in a two-step reaction: L-threonine is first activated by ATP to form Thr-AMP and then transferred to the acceptor end of tRNA(Thr). Also edits incorrectly charged L-seryl-tRNA(Thr). The protein is Threonine--tRNA ligase of Brucella canis (strain ATCC 23365 / NCTC 10854 / RM-666).